Consider the following 156-residue polypeptide: Transcriptional repressor NrdR (156 aa).

Residues 3-34 fold into a zinc finger; that stretch reads CPYCRHPDSRVVDSREAEEGAAIRRRRSCPNC. The region spanning 46-136 is the ATP-cone domain; sequence LSVVKRSGVT…VYRSFTSAED (91 aa).

The protein belongs to the NrdR family. The cofactor is Zn(2+).

Negatively regulates transcription of bacterial ribonucleotide reductase nrd genes and operons by binding to NrdR-boxes. The protein is Transcriptional repressor NrdR of Nocardia farcinica (strain IFM 10152).